The primary structure comprises 152 residues: Deoxyuridine 5'-triphosphate nucleotidohydrolase (152 aa).

Residues 72-74, Asn-85, and 89-91 contribute to the substrate site; these read RSG and TID.

It belongs to the dUTPase family. Requires Mg(2+) as cofactor.

It catalyses the reaction dUTP + H2O = dUMP + diphosphate + H(+). Its pathway is pyrimidine metabolism; dUMP biosynthesis; dUMP from dCTP (dUTP route): step 2/2. Functionally, this enzyme is involved in nucleotide metabolism: it produces dUMP, the immediate precursor of thymidine nucleotides and it decreases the intracellular concentration of dUTP so that uracil cannot be incorporated into DNA. The polypeptide is Deoxyuridine 5'-triphosphate nucleotidohydrolase (Rhodopseudomonas palustris (strain HaA2)).